Reading from the N-terminus, the 279-residue chain is 3-methyl-2-oxobutanoate hydroxymethyltransferase (279 aa).

Mg(2+)-binding residues include aspartate 43 and aspartate 82. Residues 43 to 44 (DS), aspartate 82, and lysine 112 contribute to the 3-methyl-2-oxobutanoate site. Glutamate 114 contacts Mg(2+). The Proton acceptor role is filled by glutamate 181.

This sequence belongs to the PanB family. Homodecamer; pentamer of dimers. Mg(2+) is required as a cofactor.

It is found in the cytoplasm. The enzyme catalyses 3-methyl-2-oxobutanoate + (6R)-5,10-methylene-5,6,7,8-tetrahydrofolate + H2O = 2-dehydropantoate + (6S)-5,6,7,8-tetrahydrofolate. It participates in cofactor biosynthesis; (R)-pantothenate biosynthesis; (R)-pantoate from 3-methyl-2-oxobutanoate: step 1/2. Catalyzes the reversible reaction in which hydroxymethyl group from 5,10-methylenetetrahydrofolate is transferred onto alpha-ketoisovalerate to form ketopantoate. In Bacillus pumilus (strain SAFR-032), this protein is 3-methyl-2-oxobutanoate hydroxymethyltransferase.